We begin with the raw amino-acid sequence, 367 residues long: Peptide chain release factor 2 (367 aa).

Q254 is subject to N5-methylglutamine.

It belongs to the prokaryotic/mitochondrial release factor family. Post-translationally, methylated by PrmC. Methylation increases the termination efficiency of RF2.

It is found in the cytoplasm. Peptide chain release factor 2 directs the termination of translation in response to the peptide chain termination codons UGA and UAA. In Burkholderia cenocepacia (strain ATCC BAA-245 / DSM 16553 / LMG 16656 / NCTC 13227 / J2315 / CF5610) (Burkholderia cepacia (strain J2315)), this protein is Peptide chain release factor 2.